The primary structure comprises 663 residues: Probable acetolactate synthase 2, chloroplastic (663 aa).

Residues 1-26 (MAAAAAAASLSVSDAAAKLPKPGGQV) show a composition bias toward low complexity. Positions 1 to 56 (MAAAAAAASLSVSDAAAKLPKPGGQVQRRRDRDRPRVDAAACTRDSRRPTRERCST) are disordered. Residues 1 to 79 (MAAAAAAASL…TPVRAPVRTR (79 aa)) constitute a chloroplast transit peptide. Basic and acidic residues-rich tracts occupy residues 28–37 (RRRDRDRPRV) and 44–54 (RDSRRPTRERC). E132 is a binding site for thiamine diphosphate. The cysteines at positions 152 and 298 are disulfide-linked. Residues R234, 340-361 (HGTV…LGVR), and 383-402 (DIDP…ICAD) contribute to the FAD site. The thiamine pyrophosphate binding stretch occupies residues 478–558 (QHQMWATQHY…VKVMVLNNQH (81 aa)). 2 residues coordinate Mg(2+): D529 and N556.

It belongs to the TPP enzyme family. Mg(2+) serves as cofactor. Requires thiamine diphosphate as cofactor.

Its subcellular location is the plastid. It localises to the chloroplast. It carries out the reaction 2 pyruvate + H(+) = (2S)-2-acetolactate + CO2. It functions in the pathway amino-acid biosynthesis; L-isoleucine biosynthesis; L-isoleucine from 2-oxobutanoate: step 1/4. The protein operates within amino-acid biosynthesis; L-valine biosynthesis; L-valine from pyruvate: step 1/4. In Oryza sativa subsp. japonica (Rice), this protein is Probable acetolactate synthase 2, chloroplastic (ALS2).